The chain runs to 937 residues: Outer membrane usher protein CS3-2 (937 aa).

It belongs to the fimbrial export usher family. Post-translationally, a 97 kDa form of the protein is thought to be due to post-translational processing of isoform 104 kDa.

The protein localises to the cell outer membrane. In terms of biological role, these proteins are essential for the biogenesis of mature CS3 pili, but not for synthesis of the CS3 pilin subunit. The sequence is that of Outer membrane usher protein CS3-2 from Escherichia coli.